The primary structure comprises 1072 residues: MLGDGKEGTSTIPGFNQIQFEGFYRFIDQGLIEELSKFPKIEDIDHEIEFQLFVETYQLVEPLIKERDAVYESLTYSSELYVSAGLIWKTSRNMQEQRIFIGNIPLMNSLGISIVNGIYRIVINQILQSPGIYYQSELDHNGISVYTGTIISDWGGRLELEIDKKARIWARVSRKQKISILVLSSAMGSNLREILENVCYPEIFLSFLTDKEKKKIGSKENAILEFYQQFSCVGGDPIFSESLCKELQKKFFHQRCELGRIGRRNINWRLNLNIPQNNIFLLPRDILAAADHLIGMKFGMGTLDDMNHLKNKRIRSVADLLQDQLGLALARLENVVKGTIGGAIRHKLIPTPQNLVTSTPLTTTYESFFGLHPLSQVLDRTNPLTQIVHGRKLSYLGPGGLTGRTANFRIRDIHPSHYGRICPIDTSEGINVGLIGSLSIHARIGDWGSLESPFYELFEKSKEARIRMLFLSPSQDEYYMIAAGNSLALNRDIQEEQAVPARYRQEFLTIAWEEVNLRSIFPFQYFSIGASLIPFIEHNDANRALMSSNMQRQAVPLSRSEKCIVGTGLERQVALDSGVPAIAEHEGKILSTDTEKIILSGDGNTISIPLIMYQRSNKNTCMHQKPQVRRGKCIKKGQILADGAATVGGELALGKNILVAYMPWEGYNFEDAVLISECLVYGDIYTSFHIRKYEIQTHVTTQGPERITKEIPHLEGRLLRNLDKNGIVMLGSWVETGDILVGKLTPQVAKESSYAPEDRLLRAILGIQVSTSKETCLKLPIGGRGRVIDVRWVQKKGGTSYNPEIIRVYISQKREIKVGDKVAGRHGNKGIISKILPRQDMPYLQDGRPVDMVFNPLGVPSRMNVGQIFECSLGLAGSLLDRHYRIAPFDERYEQEASRKLVFSELYEASKQTANPWVFEPEYPGKSRIFDGRTGDPFEQPVIIGKPYILKLIHQVDDKIHGRSSGHYALVTQQPLRGRSKQGGQRVGEMEVWALEGFGVAHILQEMLTYKSDHIRARQEVLGTTIIGGTIPKPEDAPESFRLLVRELRSLALELNHFLVSEKNFQINRKEV.

The protein belongs to the RNA polymerase beta chain family. In plastids the minimal PEP RNA polymerase catalytic core is composed of four subunits: alpha, beta, beta', and beta''. When a (nuclear-encoded) sigma factor is associated with the core the holoenzyme is formed, which can initiate transcription.

It localises to the plastid. It is found in the chloroplast. The catalysed reaction is RNA(n) + a ribonucleoside 5'-triphosphate = RNA(n+1) + diphosphate. In terms of biological role, DNA-dependent RNA polymerase catalyzes the transcription of DNA into RNA using the four ribonucleoside triphosphates as substrates. This Arabis hirsuta (Hairy rock-cress) protein is DNA-directed RNA polymerase subunit beta.